The primary structure comprises 480 residues: UDP-glucose 6-dehydrogenase 4 (480 aa).

NAD(+) is bound by residues 3–20, Asp33, Arg38, Thr90, Thr128, and Glu161; that span reads KICCIGAGYVGGPTMAVI. Substrate is bound by residues 157–161, Lys216, 216–223, 256–269, and Gly269; these read EFLAE, KLAANAFL, and RIGSKFLNASVGFG. Cys272 acts as the Nucleophile in catalysis. Lys275 provides a ligand contact to NAD(+). Residues Phe334 and Lys335 each contribute to the substrate site. Residue Arg342 coordinates NAD(+). Arg447 is a substrate binding site.

It belongs to the UDP-glucose/GDP-mannose dehydrogenase family.

The catalysed reaction is UDP-alpha-D-glucose + 2 NAD(+) + H2O = UDP-alpha-D-glucuronate + 2 NADH + 3 H(+). The protein operates within nucleotide-sugar biosynthesis; UDP-alpha-D-glucuronate biosynthesis; UDP-alpha-D-glucuronate from UDP-alpha-D-glucose: step 1/1. With respect to regulation, inhibited by UDP-xylose. Functionally, involved in the biosynthesis of UDP-glucuronic acid (UDP-GlcA), providing nucleotide sugars for cell-wall polymers. This Arabidopsis thaliana (Mouse-ear cress) protein is UDP-glucose 6-dehydrogenase 4.